Here is a 107-residue protein sequence, read N- to C-terminus: Cell division protein FtsB (107 aa).

The Cytoplasmic segment spans residues Met1–Lys3. A helical transmembrane segment spans residues Leu4 to Leu21. Over Gly22 to Gln107 the chain is Periplasmic. Residues Gln39–Gly62 adopt a coiled-coil conformation.

The protein belongs to the FtsB family. As to quaternary structure, part of a complex composed of FtsB, FtsL and FtsQ.

It is found in the cell inner membrane. Essential cell division protein. May link together the upstream cell division proteins, which are predominantly cytoplasmic, with the downstream cell division proteins, which are predominantly periplasmic. This Yersinia enterocolitica serotype O:8 / biotype 1B (strain NCTC 13174 / 8081) protein is Cell division protein FtsB.